Consider the following 274-residue polypeptide: tRNA-cytidine(32) 2-sulfurtransferase (274 aa).

The short motif at 40 to 45 (SGGKDS) is the PP-loop motif element. Positions 115, 118, and 206 each coordinate [4Fe-4S] cluster.

This sequence belongs to the TtcA family. Homodimer. Mg(2+) serves as cofactor. It depends on [4Fe-4S] cluster as a cofactor.

It is found in the cytoplasm. It catalyses the reaction cytidine(32) in tRNA + S-sulfanyl-L-cysteinyl-[cysteine desulfurase] + AH2 + ATP = 2-thiocytidine(32) in tRNA + L-cysteinyl-[cysteine desulfurase] + A + AMP + diphosphate + H(+). It participates in tRNA modification. Functionally, catalyzes the ATP-dependent 2-thiolation of cytidine in position 32 of tRNA, to form 2-thiocytidine (s(2)C32). The sulfur atoms are provided by the cysteine/cysteine desulfurase (IscS) system. The polypeptide is tRNA-cytidine(32) 2-sulfurtransferase (Ectopseudomonas mendocina (strain ymp) (Pseudomonas mendocina)).